Reading from the N-terminus, the 367-residue chain is Serine/threonine-protein phosphatase 2A activator 2 (367 aa).

The protein belongs to the PTPA-type PPIase family.

It is found in the cytoplasm. The enzyme catalyses [protein]-peptidylproline (omega=180) = [protein]-peptidylproline (omega=0). PPIases accelerate the folding of proteins. It catalyzes the cis-trans isomerization of proline imidic peptide bonds in oligopeptides. Acts as a regulatory subunit for PP2A-like phosphatases modulating their activity or substrate specificity, probably by inducing a conformational change in the catalytic subunit, a direct target of the PPIase. Can reactivate inactive phosphatase PP2A-phosphatase methylesterase complexes (PP2Ai) in presence of ATP and Mg(2+) by dissociating the inactive form from the complex. In Debaryomyces hansenii (strain ATCC 36239 / CBS 767 / BCRC 21394 / JCM 1990 / NBRC 0083 / IGC 2968) (Yeast), this protein is Serine/threonine-protein phosphatase 2A activator 2 (RRD2).